A 369-amino-acid chain; its full sequence is Guanine nucleotide-binding protein subunit beta-2 (369 aa).

Polar residues predominate over residues 1–24 (MSTIAGESSSSSKMPENSQPTTTE). A disordered region spans residues 1–28 (MSTIAGESSSSSKMPENSQPTTTEKGSE). WD repeat units lie at residues 79–109 (GHVG…IVWD), 121–151 (MPTT…SVVP), 167–197 (THTS…AIWD), 209–241 (GHTG…LVWD), 253–283 (GHEA…RLFD), 297–327 (SILF…GVWD), and 339–369 (GHEN…RIWA).

Belongs to the WD repeat G protein beta family. G proteins are composed of 3 units, alpha, beta and gamma. Interacts with G protein gamma subunits gpc-1 and gpc-2 and with egl-10 and eat-16.

Guanine nucleotide-binding proteins (G proteins) are involved as a modulator or transducer in various transmembrane signaling systems. The beta and gamma chains are required for the GTPase activity, for replacement of GDP by GTP, and for G protein-effector interaction. Plays a role in regulating dopamine-mediated locomotion behavior. The polypeptide is Guanine nucleotide-binding protein subunit beta-2 (Caenorhabditis elegans).